A 291-amino-acid chain; its full sequence is Elongation factor Ts (291 aa).

Residues 82-85 are involved in Mg(2+) ion dislocation from EF-Tu; sequence TDFC.

This sequence belongs to the EF-Ts family.

The protein resides in the cytoplasm. In terms of biological role, associates with the EF-Tu.GDP complex and induces the exchange of GDP to GTP. It remains bound to the aminoacyl-tRNA.EF-Tu.GTP complex up to the GTP hydrolysis stage on the ribosome. The polypeptide is Elongation factor Ts (Methylobacillus flagellatus (strain ATCC 51484 / DSM 6875 / VKM B-1610 / KT)).